A 261-amino-acid chain; its full sequence is MIKWPWRTQPPAQQDSYPWPEACAIPLLAALGDDEQQRLIALARQVIRQKRLIPLQELRVTPLMEARIALLFALPVLELGIGWLDGFHEILLYPEPYVLHEEWEDDIGLVHCGPSVQAGQCSAQGPVVLNWLDVRDSFDCSGYNLIIHETAHKLDMRNAGIASGIPPIPLREIAAWEQALHAAMEAIQEEADLLGKEGASMDAYAASEPAECFAVLSEYFFSAPELLSERFPAVYAHFARFYRQDPLQRLYQSGLLTPESF.

Zn(2+)-binding residues include His-111, His-148, His-152, and Glu-211.

This sequence belongs to the MtfA family. Interacts with Mlc. It depends on Zn(2+) as a cofactor.

The protein localises to the cytoplasm. Functionally, involved in the modulation of the activity of the glucose-phosphotransferase system (glucose-PTS). Interacts with the transcriptional repressor Mlc, preventing its interaction with DNA and leading to the modulation of expression of genes regulated by Mlc, including ptsG, which encodes the PTS system glucose-specific EIICB component. Its function is as follows. Shows zinc-dependent metallopeptidase activity. The protein is Mlc titration factor A of Edwardsiella ictaluri (strain 93-146).